We begin with the raw amino-acid sequence, 211 residues long: ATP phosphoribosyltransferase (211 aa).

It belongs to the ATP phosphoribosyltransferase family. Short subfamily. In terms of assembly, heteromultimer composed of HisG and HisZ subunits.

The protein resides in the cytoplasm. The catalysed reaction is 1-(5-phospho-beta-D-ribosyl)-ATP + diphosphate = 5-phospho-alpha-D-ribose 1-diphosphate + ATP. The protein operates within amino-acid biosynthesis; L-histidine biosynthesis; L-histidine from 5-phospho-alpha-D-ribose 1-diphosphate: step 1/9. Its function is as follows. Catalyzes the condensation of ATP and 5-phosphoribose 1-diphosphate to form N'-(5'-phosphoribosyl)-ATP (PR-ATP). Has a crucial role in the pathway because the rate of histidine biosynthesis seems to be controlled primarily by regulation of HisG enzymatic activity. The chain is ATP phosphoribosyltransferase from Lacticaseibacillus paracasei (strain ATCC 334 / BCRC 17002 / CCUG 31169 / CIP 107868 / KCTC 3260 / NRRL B-441) (Lactobacillus paracasei).